The primary structure comprises 313 residues: Small glutamine-rich tetratricopeptide repeat-containing protein alpha (313 aa).

The segment at 69–97 (KELPPDLRSPQETPPSEEDSAEAERLKTE) is disordered. A Phosphoserine modification is found at Ser77. Thr81 bears the Phosphothreonine mark. Ser84 is subject to Phosphoserine. TPR repeat units lie at residues 91-124 (AERL…NPAN), 125-158 (AVYF…DPSY), and 159-192 (SKAY…DPDN). Lys137 carries the N6-acetyllysine modification. Ser301 carries the post-translational modification Phosphoserine. At Thr303 the chain carries Phosphothreonine. Ser305 carries the post-translational modification Phosphoserine.

The protein belongs to the SGT family. In terms of assembly, homodimer. Homooligomer. Interacts with DNAJC5 and DNAJC5B. Interacts (via TPR repeats) with HSP90AA1. Interacts (via Gln-rich region) with SLC2A1. Interacts with HSP90AB1. Interacts (via TPR repeats) with HSPA8/Hsc70; the interaction is direct. Interacts with BAG6 (via ubiquitin-like domain); interaction prevents interaction between BAG6 and RNF126. Forms a multiprotein complex, at least composed of DNAJB12, DNAJB14, HSPA8/Hsc70 and SGTA; interaction with DNAJB14 and HSPA8/Hsc70 is direct.

The protein resides in the cytoplasm. Its subcellular location is the nucleus. Functionally, co-chaperone that binds misfolded and hydrophobic patches-containing client proteins in the cytosol. Mediates their targeting to the endoplasmic reticulum but also regulates their sorting to the proteasome when targeting fails. Functions in tail-anchored/type II transmembrane proteins membrane insertion constituting with ASNA1 and the BAG6 complex a targeting module. Functions upstream of the BAG6 complex and ASNA1, binding more rapidly the transmembrane domain of newly synthesized proteins. It is also involved in the regulation of the endoplasmic reticulum-associated misfolded protein catabolic process via its interaction with BAG6: collaborates with the BAG6 complex to maintain hydrophobic substrates in non-ubiquitinated states. Competes with RNF126 for interaction with BAG6, preventing the ubiquitination of client proteins associated with the BAG6 complex. Binds directly to HSC70 and HSP70 and regulates their ATPase activity. This Bos taurus (Bovine) protein is Small glutamine-rich tetratricopeptide repeat-containing protein alpha (SGTA).